The sequence spans 426 residues: Protein TolB homolog (426 aa).

A signal peptide spans 1 to 19 (MFLRSFLCLLCLLPSILYC).

The protein belongs to the TolB family.

Its subcellular location is the periplasm. The polypeptide is Protein TolB homolog (Chlamydia muridarum (strain MoPn / Nigg)).